Reading from the N-terminus, the 291-residue chain is Small ribosomal subunit biogenesis GTPase RsgA (291 aa).

A CP-type G domain is found at 63–221 (HNELKRPPVS…IADTPGFSAL (159 aa)). GTP contacts are provided by residues 112–115 (TKKD) and 164–172 (GQSGVGKST). Residues cysteine 245, cysteine 250, histidine 252, and cysteine 258 each coordinate Zn(2+).

Belongs to the TRAFAC class YlqF/YawG GTPase family. RsgA subfamily. Monomer. Associates with 30S ribosomal subunit, binds 16S rRNA. Requires Zn(2+) as cofactor.

The protein resides in the cytoplasm. Its function is as follows. One of several proteins that assist in the late maturation steps of the functional core of the 30S ribosomal subunit. Helps release RbfA from mature subunits. May play a role in the assembly of ribosomal proteins into the subunit. Circularly permuted GTPase that catalyzes slow GTP hydrolysis, GTPase activity is stimulated by the 30S ribosomal subunit. This chain is Small ribosomal subunit biogenesis GTPase RsgA, found in Staphylococcus haemolyticus (strain JCSC1435).